A 226-amino-acid chain; its full sequence is Uridylate kinase (226 aa).

An ATP-binding site is contributed by 6-10 (KISGK). A UMP-binding site is contributed by G43. ATP-binding residues include G44 and R48. UMP is bound by residues D65 and 113 to 119 (FQPGQST). ATP-binding residues include T139, N140, Y145, and D148.

This sequence belongs to the UMP kinase family. In terms of assembly, homohexamer.

The protein localises to the cytoplasm. It catalyses the reaction UMP + ATP = UDP + ADP. The protein operates within pyrimidine metabolism; CTP biosynthesis via de novo pathway; UDP from UMP (UMPK route): step 1/1. Its activity is regulated as follows. Inhibited by UTP. Catalyzes the reversible phosphorylation of UMP to UDP. This Sulfurisphaera tokodaii (strain DSM 16993 / JCM 10545 / NBRC 100140 / 7) (Sulfolobus tokodaii) protein is Uridylate kinase.